Consider the following 79-residue polypeptide: Endothelin-2 (79 aa).

The tract at residues 1–23 (PEQTAPYGLGNPPRRRRRSLPRR) is disordered. The interval 24–39 (CQCSSARDPSCATFCL) is endothelin-like. Positions 51–79 (SRKSPADVFQTGKTGATRGELLQRLRDIS) are disordered.

This sequence belongs to the endothelin/sarafotoxin family.

The protein resides in the secreted. In terms of biological role, endothelins are endothelium-derived vasoconstrictor peptides. This Macaca fascicularis (Crab-eating macaque) protein is Endothelin-2 (EDN2).